The primary structure comprises 267 residues: Acetyl-coenzyme A carboxylase carboxyl transferase subunit beta 1 (267 aa).

A CoA carboxyltransferase N-terminal domain is found at 9 to 267; that stretch reads TWQACPKCGR…NYGIGRSAHG (259 aa). Zn(2+)-binding residues include C13, C16, C31, and C34. The C4-type zinc-finger motif lies at 13-34; it reads CPKCGRHVHQRQWGTYQQCPYC.

Belongs to the AccD/PCCB family. In terms of assembly, acetyl-CoA carboxylase is a heterohexamer composed of biotin carboxyl carrier protein (AccB), biotin carboxylase (AccC) and two subunits each of ACCase subunit alpha (AccA) and ACCase subunit beta (AccD). Requires Zn(2+) as cofactor.

The protein resides in the cytoplasm. The enzyme catalyses N(6)-carboxybiotinyl-L-lysyl-[protein] + acetyl-CoA = N(6)-biotinyl-L-lysyl-[protein] + malonyl-CoA. It participates in lipid metabolism; malonyl-CoA biosynthesis; malonyl-CoA from acetyl-CoA: step 1/1. Component of the acetyl coenzyme A carboxylase (ACC) complex. Biotin carboxylase (BC) catalyzes the carboxylation of biotin on its carrier protein (BCCP) and then the CO(2) group is transferred by the transcarboxylase to acetyl-CoA to form malonyl-CoA. This is Acetyl-coenzyme A carboxylase carboxyl transferase subunit beta 1 from Lactiplantibacillus plantarum (strain JDM1) (Lactobacillus plantarum).